The primary structure comprises 276 residues: Small ribosomal subunit protein uS2 (276 aa).

The segment at 254–276 is disordered; sequence LAGATAAAPAEGAVATETTPTEG. Low complexity predominate over residues 255–276; that stretch reads AGATAAAPAEGAVATETTPTEG.

It belongs to the universal ribosomal protein uS2 family.

This Mycobacterium ulcerans (strain Agy99) protein is Small ribosomal subunit protein uS2.